The following is a 222-amino-acid chain: Ribosomal RNA small subunit methyltransferase G (222 aa).

Residues Gly-84, Phe-89, 141–142, and Arg-154 contribute to the S-adenosyl-L-methionine site; that span reads VE.

Belongs to the methyltransferase superfamily. RNA methyltransferase RsmG family.

Its subcellular location is the cytoplasm. It carries out the reaction guanosine(527) in 16S rRNA + S-adenosyl-L-methionine = N(7)-methylguanosine(527) in 16S rRNA + S-adenosyl-L-homocysteine. Its function is as follows. Specifically methylates the N7 position of guanine in position 527 of 16S rRNA. The chain is Ribosomal RNA small subunit methyltransferase G from Bradyrhizobium sp. (strain ORS 278).